Reading from the N-terminus, the 377-residue chain is G-protein coupled receptor 54 (377 aa).

Topologically, residues 1 to 49 (MYSSEELWNSTEQVWINGSGTNFSLGRHEDDEEEEGDKHPFFTDAWLVP) are extracellular. 3 N-linked (GlcNAc...) asparagine glycosylation sites follow: Asn9, Asn17, and Asn22. The chain crosses the membrane as a helical span at residues 50–70 (LFFSLIMLVGLVGNSLVIYVI). The Cytoplasmic portion of the chain corresponds to 71 to 91 (SKHRQMRTATNFYIANLAATD). The chain crosses the membrane as a helical span at residues 92–112 (IIFLVCCVPFTATLYPLPGWI). The Extracellular portion of the chain corresponds to 113–119 (FGNFMCK). The cysteines at positions 118 and 198 are disulfide-linked. A helical membrane pass occupies residues 120–140 (FVAFLQQVTVQATCITLTAMS). Over 141–160 (GDRCYVTVYPLKSLRHRTPK) the chain is Cytoplasmic. A helical transmembrane segment spans residues 161-181 (VAMIVSICIWIGSFVLSTPIL). The Extracellular segment spans residues 182-209 (MYQRIEEGYWYGPRQYCMERFPSKTHER). The helical transmembrane segment at 210–230 (AFILYQFIAAYLLPVLTISFC) threads the bilayer. The Cytoplasmic portion of the chain corresponds to 231 to 269 (YTLMVKRVGQPTVEPVDNNYQVNLLSERTISIRSKVSKM). Residues 270–290 (VVVIVLLFAICWGPIQIFVLF) form a helical membrane-spanning segment. At 291-305 (QSFYPNYQPNYATYK) the chain is on the extracellular side. A helical membrane pass occupies residues 306–328 (IKTWANCMSYANSSVNPIVYGFM). Over 329–377 (GASFQKSFRKTFPFLFKHKVRDSSMASRTANAEIKFVAAEEGNNNNAVN) the chain is Cytoplasmic.

Belongs to the G-protein coupled receptor 1 family. In terms of tissue distribution, expressed in a significantly high percentage (45-60%) of mature GnRH1, GnRH2, and GnRH3 neurons and in immature GnRH3 neurons, which had migrated to the vicinity of their final locations in the brain. Only 5% of immature GnRH1 and GnRH2 neurons have receptor transcripts.

It localises to the cell membrane. In terms of biological role, receptor speculated to be essential for sexual development. May regulate gonadotropin-releasing hormone (GnRH) secretion. The receptor expression could be a 'stop signal' for GnRH1, GnRH2, and GnRH3 neuronal migration, leading to suppression of cell growth and modulation of GnRH secretion, which is important for normal sexual development. The protein is G-protein coupled receptor 54 (gpr54) of Oreochromis niloticus (Nile tilapia).